Consider the following 253-residue polypeptide: Glucosamine-6-phosphate deaminase (253 aa).

The Proton acceptor; for enolization step role is filled by D67. The active-site For ring-opening step is the N136. The Proton acceptor; for ring-opening step role is filled by H138. E143 serves as the catalytic For ring-opening step.

This sequence belongs to the glucosamine/galactosamine-6-phosphate isomerase family. NagB subfamily.

It carries out the reaction alpha-D-glucosamine 6-phosphate + H2O = beta-D-fructose 6-phosphate + NH4(+). The protein operates within amino-sugar metabolism; N-acetylneuraminate degradation; D-fructose 6-phosphate from N-acetylneuraminate: step 5/5. Functionally, catalyzes the reversible isomerization-deamination of glucosamine 6-phosphate (GlcN6P) to form fructose 6-phosphate (Fru6P) and ammonium ion. This is Glucosamine-6-phosphate deaminase from Thermoanaerobacter pseudethanolicus (strain ATCC 33223 / 39E) (Clostridium thermohydrosulfuricum).